Consider the following 203-residue polypeptide: Orotate phosphoribosyltransferase (203 aa).

Residues arginine 94, lysine 95, lysine 98, histidine 100, and 119-127 each bind 5-phospho-alpha-D-ribose 1-diphosphate; that span reads DDVATTGGS. The orotate site is built by threonine 123 and arginine 151.

It belongs to the purine/pyrimidine phosphoribosyltransferase family. PyrE subfamily. In terms of assembly, homodimer. Mg(2+) is required as a cofactor.

It carries out the reaction orotidine 5'-phosphate + diphosphate = orotate + 5-phospho-alpha-D-ribose 1-diphosphate. Its pathway is pyrimidine metabolism; UMP biosynthesis via de novo pathway; UMP from orotate: step 1/2. Its function is as follows. Catalyzes the transfer of a ribosyl phosphate group from 5-phosphoribose 1-diphosphate to orotate, leading to the formation of orotidine monophosphate (OMP). The sequence is that of Orotate phosphoribosyltransferase from Staphylothermus marinus (strain ATCC 43588 / DSM 3639 / JCM 9404 / F1).